Reading from the N-terminus, the 610-residue chain is ATP-dependent zinc metalloprotease FtsH (610 aa).

At 1–5 (MNRSN) the chain is on the cytoplasmic side. The helical transmembrane segment at 6–26 (IWNLLFTILIIVTLFWLARFF) threads the bilayer. Residues 27-107 (YVENSPVSKL…SGERSGSSSF (81 aa)) lie on the Periplasmic side of the membrane. A helical membrane pass occupies residues 108–128 (WINVLGTLIPTILFIVVWLFI). At 129–610 (MRSLSGRNNQ…LSEEFEKVVE (482 aa)) the chain is on the cytoplasmic side. ATP is bound by residues Gly-164, 204 to 208 (GTGKT), Leu-209, His-343, and Glu-371. His-423 is a Zn(2+) binding site. Residue Glu-424 is part of the active site. The Zn(2+) site is built by His-427 and Asp-500.

It in the central section; belongs to the AAA ATPase family. The protein in the C-terminal section; belongs to the peptidase M41 family. The isolated ADP-bound cytosolic domain forms a 6-fold symmetric protease disk and a 2-fold symmetric AAA ATPase ring. In the absence of nucleotide the AAA ATPase ring also forms symmetric hexamers. It depends on Zn(2+) as a cofactor.

It localises to the cell inner membrane. Acts as a processive, ATP-dependent zinc metallopeptidase for both cytoplasmic and membrane proteins. Plays a role in the quality control of integral membrane proteins. The chain is ATP-dependent zinc metalloprotease FtsH from Thermotoga maritima (strain ATCC 43589 / DSM 3109 / JCM 10099 / NBRC 100826 / MSB8).